Reading from the N-terminus, the 979-residue chain is Protocadherin alpha-9 (979 aa).

Positions 1-59 (MRLGNRPEDIRTCVHLRWHIHGLLRQENASVVISKCLRHGAWRLLLWLLLLATWDVGSG) are cleaved as a signal peptide. Topologically, residues 60 to 726 (QLHYSVPEEA…RREASLMDVN (667 aa)) are extracellular. 6 consecutive Cadherin domains span residues 64–163 (SVPE…PPIF), 164–272 (SVAE…APVF), 273–380 (DRSV…APEI), 381–485 (VLTS…APAF), 486–595 (AHPE…PPTL), and 611–707 (VSRS…VPKA). Residues N287 and N295 are each glycosylated (N-linked (GlcNAc...) asparagine). N-linked (GlcNAc...) asparagine glycosylation is present at N578. The chain crosses the membrane as a helical span at residues 727–747 (VYLIIAICAVSSLLVLTLLLY). The Cytoplasmic portion of the chain corresponds to 748 to 979 (TALRCSAVPM…GNSTTDNSDQ (232 aa)). PXXP repeat units lie at residues 763–766 (LGKP), 828–831 (PRQP), 861–864 (PGGP), 902–905 (PGNP), and 920–923 (PGSP). Residues 763 to 923 (LGKPTLVCSS…PDKFIIPGSP (161 aa)) are 5 X 4 AA repeats of P-X-X-P. The tract at residues 859–979 (AGPGGPDQQW…GNSTTDNSDQ (121 aa)) is disordered. The span at 938 to 952 (DKSDFITFGKKEETK) shows a compositional bias: basic and acidic residues.

The protein resides in the cell membrane. Potential calcium-dependent cell-adhesion protein. May be involved in the establishment and maintenance of specific neuronal connections in the brain. The chain is Protocadherin alpha-9 from Mus musculus (Mouse).